The following is a 111-amino-acid chain: Antitoxin PrlF (111 aa).

The region spanning 12 to 59 (TTESKVTIRGQTTIPAPVREALKLKPGLDSIHYEILPGGQVFMCRLGD) is the SpoVT-AbrB domain.

Homodimer; forms a complex with YhaV with stoichiometry PrlF(2)-YhaV(4), possibly as a YhaV(2)-PrlF(2)-YhaV(2) complex like the MazFE complex.

It is found in the cytoplasm. Functionally, antitoxin component of a type II toxin-antitoxin (TA) system. Labile antitoxin that binds to the YhaV toxin and neutralizes its ribonuclease activity. Also acts as a transcription factor. The YhaV/PrlF complex binds the prlF-yhaV operon, probably negatively regulating its expression. The protein is Antitoxin PrlF (prlF) of Escherichia coli O6:H1 (strain CFT073 / ATCC 700928 / UPEC).